Here is a 158-residue protein sequence, read N- to C-terminus: Putative pre-16S rRNA nuclease (158 aa).

The tract at residues 138–158 is disordered; sequence ELKPAQQTASRSGAGAGDGGS.

Belongs to the YqgF nuclease family.

Its subcellular location is the cytoplasm. Could be a nuclease involved in processing of the 5'-end of pre-16S rRNA. The protein is Putative pre-16S rRNA nuclease of Synechococcus sp. (strain CC9605).